The following is a 64-amino-acid chain: Myotoxin-2 (64 aa).

Residues 1–21 (KILYLLFAFLFLAFLSEPGNA) form the signal peptide. A disulfide bridge connects residues cysteine 32 and cysteine 51.

Belongs to the crotamine-myotoxin family. As to quaternary structure, monomer. As to expression, expressed by the venom gland.

The protein localises to the secreted. Cationic peptide that possesses multiple functions. It acts as a cell-penetrating peptide (CPP), and as a potent voltage-gated potassium channel (Kv) inhibitor. It exhibits antimicrobial activities, hind limb paralysis, and severe muscle necrosis by a non-enzymatic mechanism. The chain is Myotoxin-2 from Crotalus durissus terrificus (South American rattlesnake).